We begin with the raw amino-acid sequence, 107 residues long: Iron-sulfur cluster assembly protein CyaY (107 aa).

It belongs to the frataxin family.

Its function is as follows. Involved in iron-sulfur (Fe-S) cluster assembly. May act as a regulator of Fe-S biogenesis. The polypeptide is Iron-sulfur cluster assembly protein CyaY (Yersinia pseudotuberculosis serotype O:1b (strain IP 31758)).